We begin with the raw amino-acid sequence, 233 residues long: Probable GTP-binding protein EngB (233 aa).

An EngB-type G domain is found at 21–228; it reads GLPEVALVGR…WRWIREHVQD (208 aa). Residues 29–36 and 56–60 contribute to the GTP site; these read GRSNVGKS and GRTQA. Positions 36 and 58 each coordinate Mg(2+). Positions 68–87 are disordered; the sequence is PQGKPRPEGEPQPDKDAGRT. Residues 72 to 85 are compositionally biased toward basic and acidic residues; that stretch reads PRPEGEPQPDKDAG. GTP is bound by residues 107–110, 174–177, and 207–209; these read DMPG, TKAD, and FSA.

The protein belongs to the TRAFAC class TrmE-Era-EngA-EngB-Septin-like GTPase superfamily. EngB GTPase family. Requires Mg(2+) as cofactor.

Its function is as follows. Necessary for normal cell division and for the maintenance of normal septation. In Symbiobacterium thermophilum (strain DSM 24528 / JCM 14929 / IAM 14863 / T), this protein is Probable GTP-binding protein EngB.